Reading from the N-terminus, the 296-residue chain is Developmental pluripotency-associated protein 4 (296 aa).

Positions M1 to E13 are enriched in basic and acidic residues. The tract at residues M1–P73 is disordered. Low complexity predominate over residues S23–K34. Residues K42–D58 are compositionally biased toward basic and acidic residues.

As to quaternary structure, interacts with DPPA2. Interacts with PCGF1. In terms of tissue distribution, expressed in pluripotent embryonic cells, but not in differentiated somatic tissues.

The protein localises to the nucleus. Its function is as follows. May be involved in the maintenance of active epigenetic status of target genes. May inhibit differentiation of embryonic stem (ES) cells into a primitive ectoderm lineage. This chain is Developmental pluripotency-associated protein 4 (Dppa4), found in Mus musculus (Mouse).